A 291-amino-acid chain; its full sequence is Elongation factor Ts (291 aa).

The interval T79 to V82 is involved in Mg(2+) ion dislocation from EF-Tu.

The protein belongs to the EF-Ts family.

Its subcellular location is the cytoplasm. Functionally, associates with the EF-Tu.GDP complex and induces the exchange of GDP to GTP. It remains bound to the aminoacyl-tRNA.EF-Tu.GTP complex up to the GTP hydrolysis stage on the ribosome. The polypeptide is Elongation factor Ts (Ruegeria sp. (strain TM1040) (Silicibacter sp.)).